The following is a 189-amino-acid chain: Ras-like protein 1 (189 aa).

Residue 10-17 (GAGGVGKS) participates in GTP binding. Positions 32–40 (YDPTIEDSY) match the Effector region motif. Residues 57 to 61 (DTAGQ) and 116 to 119 (NKCD) contribute to the GTP site. Cysteine 186 carries the cysteine methyl ester modification. A lipid anchor (S-geranylgeranyl cysteine) is attached at cysteine 186. A propeptide spans 187–189 (KML) (removed in mature form).

Belongs to the small GTPase superfamily. Ras family.

It localises to the cell membrane. It carries out the reaction GTP + H2O = GDP + phosphate + H(+). Alternates between an inactive form bound to GDP and an active form bound to GTP. Activated by a guanine nucleotide-exchange factor (GEF) and inactivated by a GTPase-activating protein (GAP). Its function is as follows. Ras proteins bind GDP/GTP and possess intrinsic GTPase activity. Plays a role in eye development by regulating cell growth, survival of postmitotic ommatidial cells and differentiation of photoreceptor cells. During larval development, mediates Ptth/tor signaling leading to the production of ecdysone, a hormone required for the initiation of metamorphosis. The polypeptide is Ras-like protein 1 (Drosophila ananassae (Fruit fly)).